Here is a 399-residue protein sequence, read N- to C-terminus: MSNKLVLVLNCGSSSLKFAVIDAQTGDDQISGLAECFGLEDSRIKWKINGEKHESSLGAFTAHREAVEFIVNKILAGQPELAAQIQAVGHRIVHGGEKFTRSVIIDEHVIKGIEECSSLAPLHNPAHLIGIRAAMASFPKLPQVAVFDTAFHQSMPERSFIYALPYKLYREHGIRRYGMHGTSHLFVSREAAKVLKKPLAETNVICAHLGNGASVTAVKGGKSVDTSMGLTPLEGLVMGTRCGDIDPSIIYHLVHQLGYTLEEVNNLMNKQSGLLGISELTNDCRGIEEGYADGHKGATLALEIFCYRLAKYIASYTVPLGRLDAVVFTGGIGENSDIIREKVLNMLQIFNFHVDSERNKAARFGKKGIITADNSTVAMVIPTNEEWVIAEDSIKLITK.

N10 is a binding site for Mg(2+). K17 lines the ATP pocket. R91 provides a ligand contact to substrate. The active-site Proton donor/acceptor is D148. ATP-binding positions include 208-212, 283-285, and 331-335; these read HLGNG, DCR, and GIGEN. E385 contributes to the Mg(2+) binding site.

Belongs to the acetokinase family. In terms of assembly, homodimer. The cofactor is Mg(2+). Mn(2+) serves as cofactor.

The protein localises to the cytoplasm. It carries out the reaction acetate + ATP = acetyl phosphate + ADP. Its pathway is metabolic intermediate biosynthesis; acetyl-CoA biosynthesis; acetyl-CoA from acetate: step 1/2. In terms of biological role, catalyzes the formation of acetyl phosphate from acetate and ATP. Can also catalyze the reverse reaction. This Shewanella oneidensis (strain ATCC 700550 / JCM 31522 / CIP 106686 / LMG 19005 / NCIMB 14063 / MR-1) protein is Acetate kinase.